The following is a 375-amino-acid chain: Probable 1-acyl-sn-glycerol-3-phosphate acyltransferase 5 (375 aa).

2 helical membrane passes run 21 to 41 (IICLMVLVSTAFMMLIFWGFL) and 57 to 77 (CVSFFFGSWLALWPFLFEKIN). The HXXXXD motif signature appears at 100–105 (HRTEVD). Helical transmembrane passes span 312–332 (YLINCLAVIAFTTICTHLTFF) and 337–357 (WFRIYVSLACVYLTSATHFNL).

It belongs to the 1-acyl-sn-glycerol-3-phosphate acyltransferase family. In terms of tissue distribution, widely expressed at low level.

It localises to the membrane. It carries out the reaction a 1-acyl-sn-glycero-3-phosphate + an acyl-CoA = a 1,2-diacyl-sn-glycero-3-phosphate + CoA. The protein operates within phospholipid metabolism; CDP-diacylglycerol biosynthesis; CDP-diacylglycerol from sn-glycerol 3-phosphate: step 2/3. In terms of biological role, may convert lysophosphatidic acid (LPA) into phosphatidic acid by incorporating acyl moiety at the 2 position. Has no activity when expressed in bacteria or yeast. The chain is Probable 1-acyl-sn-glycerol-3-phosphate acyltransferase 5 (LPAT5) from Arabidopsis thaliana (Mouse-ear cress).